We begin with the raw amino-acid sequence, 485 residues long: MTDIINKLQAFADANPQSIAVRHTTDELTYQQLMDESSKLAHRLQGSKKPMILFGHMSPYMIVGMIGAIKAGCGYVPVDTSIPEDRIKMIINKVQPEFVFNTTDESFESLEGEVFTIEDIKTSQDPVIFDSQIKDNDTVYTIFTSGSTGEPKGVQIEYASLVQFTEWMLELNKSGNEQQWLNQAPFSFDLSVMAIYPCLASGGTLNLVDKNMINKPKLLNEMLTATPINIWVSTPSFMEMCLLLPTLNEEQYGSLNEFFFCGEILPHRAAKALVNRFPSATIYNTYGPTEATVAVTSIQITQEILDQYPTLPVGVERPGARLSTTDEGELVIEGQSVSLGYLKNDQKTAEVFNFDDGIRTYHTGDKAKFENGQWFIQGRIDFQIKLNGYRMELEEIETQLRQSEFVKEAIVVPVYKNDKVIHLIGAIVPTTEVTDNAEMTKNIKNDLKSRLPEYMIPRKFEWMEQLPLTSNGKIDRKKIAEVING.

144 to 145 contacts ATP; the sequence is TS. D189 serves as a coordination point for D-alanine. 284 to 289 contributes to the ATP binding site; sequence NTYGPT. Residue V293 participates in D-alanine binding. ATP-binding residues include D365 and K473. K473 lines the D-alanine pocket.

This sequence belongs to the ATP-dependent AMP-binding enzyme family. DltA subfamily.

The protein localises to the cytoplasm. The enzyme catalyses holo-[D-alanyl-carrier protein] + D-alanine + ATP = D-alanyl-[D-alanyl-carrier protein] + AMP + diphosphate. The protein operates within cell wall biogenesis; lipoteichoic acid biosynthesis. Catalyzes the first step in the D-alanylation of lipoteichoic acid (LTA), the activation of D-alanine and its transfer onto the D-alanyl carrier protein (Dcp) DltC. In an ATP-dependent two-step reaction, forms a high energy D-alanyl-AMP intermediate, followed by transfer of the D-alanyl residue as a thiol ester to the phosphopantheinyl prosthetic group of the Dcp. D-alanylation of LTA plays an important role in modulating the properties of the cell wall in Gram-positive bacteria, influencing the net charge of the cell wall. The polypeptide is D-alanine--D-alanyl carrier protein ligase (Staphylococcus aureus (strain USA300)).